We begin with the raw amino-acid sequence, 454 residues long: NADP-specific glutamate dehydrogenase 1 (454 aa).

The residue at position 2 (serine 2) is an N-acetylserine. Residue lysine 110 is part of the active site. 174-203 (GVLTGKGLNWGGSLIRPEATGYGLVYYTQA) contributes to the NAD(+) binding site. Residues lysine 325, lysine 371, and lysine 433 each participate in a glycyl lysine isopeptide (Lys-Gly) (interchain with G-Cter in ubiquitin) cross-link.

This sequence belongs to the Glu/Leu/Phe/Val dehydrogenases family. Homohexamer.

It carries out the reaction L-glutamate + NADP(+) + H2O = 2-oxoglutarate + NH4(+) + NADPH + H(+). Functionally, catalyzes the incorporation of an ammonium ion into alpha-ketoglutarate to form L-glutamate, the major route of assimilation of ammonia into an organic form in yeast. The chain is NADP-specific glutamate dehydrogenase 1 from Saccharomyces cerevisiae (strain ATCC 204508 / S288c) (Baker's yeast).